The primary structure comprises 102 residues: MGFENSPHPPTLFLLRSILRYKPHQHRTNHNPMIVQCRSLTLPGLCCIPPYTFQQRVSTCKKPILRQIYHISSHQDRTKQSGRGRILARGKYVVSHPSDQAH.

The tract at residues 73–102 is disordered; that stretch reads SHQDRTKQSGRGRILARGKYVVSHPSDQAH.

This is Putative protein p21 (21) from Escherichia coli (Bacteriophage APSE-1).